The sequence spans 274 residues: Pre-rRNA-processing protein PNO1 (274 aa).

A disordered region spans residues 1–70 (MVAPTALKKA…GSRKTHESKT (70 aa)). Over residues 33 to 48 (SIDEDDDDDVLLDDSD) the composition is skewed to acidic residues. Ser-47 bears the Phosphoserine mark. The residue at position 51 (Thr-51) is a Phosphothreonine. Positions 51-69 (TAKEEVEGEEGSRKTHESK) are enriched in basic and acidic residues. One can recognise a KH domain in the interval 195 to 247 (GDHLSRAIGRIAGKDGKTKFAIENATRTRIVLADSKIHILGGFTHIRMARESV).

Belongs to the PNO1 family. In terms of assembly, component of the small ribosomal subunit, ribosomal RNA processing complex (SSU RRP complex). Interacts with NOB1.

The protein resides in the cytoplasm. The protein localises to the nucleus. Its subcellular location is the nucleolus. In terms of biological role, required for small ribosomal subunit (SSU) synthesis. Has a role in the processing of early nucleolar and late cytoplasmic pre-RNA species. Recruits DIM1 to nucleolar pre-RNAs. Indirectly required for cleavage at the A2 site of the 20S pre-rRNA, forming 18S rRNA, and at A1 and A2 sites of other pre-rRNAs. This chain is Pre-rRNA-processing protein PNO1 (PNO1), found in Saccharomyces cerevisiae (strain ATCC 204508 / S288c) (Baker's yeast).